Here is a 484-residue protein sequence, read N- to C-terminus: Probable glycine dehydrogenase (decarboxylating) subunit 2 (484 aa).

Lys264 is modified (N6-(pyridoxal phosphate)lysine).

The protein belongs to the GcvP family. C-terminal subunit subfamily. In terms of assembly, the glycine cleavage system is composed of four proteins: P, T, L and H. In this organism, the P 'protein' is a heterodimer of two subunits. Pyridoxal 5'-phosphate is required as a cofactor.

The enzyme catalyses N(6)-[(R)-lipoyl]-L-lysyl-[glycine-cleavage complex H protein] + glycine + H(+) = N(6)-[(R)-S(8)-aminomethyldihydrolipoyl]-L-lysyl-[glycine-cleavage complex H protein] + CO2. In terms of biological role, the glycine cleavage system catalyzes the degradation of glycine. The P protein binds the alpha-amino group of glycine through its pyridoxal phosphate cofactor; CO(2) is released and the remaining methylamine moiety is then transferred to the lipoamide cofactor of the H protein. The protein is Probable glycine dehydrogenase (decarboxylating) subunit 2 of Legionella pneumophila subsp. pneumophila (strain Philadelphia 1 / ATCC 33152 / DSM 7513).